Reading from the N-terminus, the 141-residue chain is Hemoglobin subunit alpha-D (141 aa).

A Globin domain is found at 1-141 (MLTADDKKLL…VAAVLAEKYR (141 aa)). Heme b-binding residues include histidine 58 and histidine 87.

It belongs to the globin family. Heterotetramer of two alpha-D chains and two beta chains. Red blood cells.

Involved in oxygen transport from the lung to the various peripheral tissues. The polypeptide is Hemoglobin subunit alpha-D (HBAD) (Chloephaga melanoptera (Andean goose)).